The primary structure comprises 128 residues: Sulfurtransferase TusD (128 aa).

The active-site Cysteine persulfide intermediate is the C78.

The protein belongs to the DsrE/TusD family. As to quaternary structure, heterohexamer, formed by a dimer of trimers. The hexameric TusBCD complex contains 2 copies each of TusB, TusC and TusD. The TusBCD complex interacts with TusE.

The protein resides in the cytoplasm. Functionally, part of a sulfur-relay system required for 2-thiolation of 5-methylaminomethyl-2-thiouridine (mnm(5)s(2)U) at tRNA wobble positions. Accepts sulfur from TusA and transfers it in turn to TusE. The sequence is that of Sulfurtransferase TusD from Salmonella newport (strain SL254).